Consider the following 440-residue polypeptide: Trigger factor (440 aa).

Residues 163-248 (GDGVTVDFEG…VKKIESAHLP (86 aa)) enclose the PPIase FKBP-type domain.

It belongs to the FKBP-type PPIase family. Tig subfamily.

The protein localises to the cytoplasm. It carries out the reaction [protein]-peptidylproline (omega=180) = [protein]-peptidylproline (omega=0). Its function is as follows. Involved in protein export. Acts as a chaperone by maintaining the newly synthesized protein in an open conformation. Functions as a peptidyl-prolyl cis-trans isomerase. The polypeptide is Trigger factor (Verminephrobacter eiseniae (strain EF01-2)).